A 193-amino-acid chain; its full sequence is Bcl-2-like protein 2 (193 aa).

At alanine 2 the chain carries N-acetylalanine. The short motif at 9–29 is the BH4 element; that stretch reads DTRALVADFVGYKLRQKGYVC. A BH1 motif is present at residues 85-104; the sequence is ELFQGGPNWGRLVAFFVFGA. Positions 136–151 match the BH2 motif; that stretch reads DWIHSSGGWAEFTALY.

This sequence belongs to the Bcl-2 family. In terms of assembly, interacts with HIF3A (via C-terminus domain). Interacts with BOP.

It is found in the mitochondrion membrane. Functionally, promotes cell survival. Blocks dexamethasone-induced apoptosis. Mediates survival of postmitotic Sertoli cells by suppressing death-promoting activity of BAX. This chain is Bcl-2-like protein 2 (BCL2L2), found in Bos taurus (Bovine).